Here is a 310-residue protein sequence, read N- to C-terminus: Beta sliding clamp (310 aa).

Belongs to the beta sliding clamp family. Forms a ring-shaped head-to-tail homodimer around DNA which binds and tethers DNA polymerases and other proteins to the DNA. The DNA replisome complex has a single clamp-loading complex (3 tau and 1 each of delta, delta', psi and chi subunits) which binds 3 Pol III cores (1 core on the leading strand and 2 on the lagging strand) each with a beta sliding clamp dimer. Additional proteins in the replisome are other copies of gamma, psi and chi, Ssb, DNA helicase and RNA primase.

It localises to the cytoplasm. Its function is as follows. Confers DNA tethering and processivity to DNA polymerases and other proteins. Acts as a clamp, forming a ring around DNA (a reaction catalyzed by the clamp-loading complex) which diffuses in an ATP-independent manner freely and bidirectionally along dsDNA. Initially characterized for its ability to contact the catalytic subunit of DNA polymerase III (Pol III), a complex, multichain enzyme responsible for most of the replicative synthesis in bacteria; Pol III exhibits 3'-5' exonuclease proofreading activity. The beta chain is required for initiation of replication as well as for processivity of DNA replication. The sequence is that of Beta sliding clamp (dnaN) from Micrococcus luteus (Micrococcus lysodeikticus).